Reading from the N-terminus, the 180-residue chain is Large ribosomal subunit protein uL6 (180 aa).

It belongs to the universal ribosomal protein uL6 family. Part of the 50S ribosomal subunit.

This protein binds to the 23S rRNA, and is important in its secondary structure. It is located near the subunit interface in the base of the L7/L12 stalk, and near the tRNA binding site of the peptidyltransferase center. In Salinispora arenicola (strain CNS-205), this protein is Large ribosomal subunit protein uL6.